We begin with the raw amino-acid sequence, 248 residues long: MLKKIVIGVTATAAFGIGAGALAGGSVDQSYNNTSGAGFYVRGEAGYGLVDKKSGTSKVNFTGVTLTENSHTNTKKSRGFNGRVAIGYAFNPYFSLESGFTYYHPAYRDVNIAGSALPLFSSVQAEGRQKINLYSIDLMGKATLPIDNFYAFIEGGVAYVHTKFVAFTETGTAVSPLLPPVTSSVAVKVPSSSKGYIRPKAGIGVGYNITQNIGVDVSYSRVFGQGKINNTNYLPNLNAVTLGLTYKF.

The N-terminal stretch at 1–23 (MLKKIVIGVTATAAFGIGAGALA) is a signal peptide.

It localises to the cell outer membrane. This is an uncharacterized protein from Coxiella burnetii (strain RSA 493 / Nine Mile phase I).